A 345-amino-acid polypeptide reads, in one-letter code: Phosphoribosylformylglycinamidine cyclo-ligase (345 aa).

The protein belongs to the AIR synthase family.

Its subcellular location is the cytoplasm. The catalysed reaction is 2-formamido-N(1)-(5-O-phospho-beta-D-ribosyl)acetamidine + ATP = 5-amino-1-(5-phospho-beta-D-ribosyl)imidazole + ADP + phosphate + H(+). It participates in purine metabolism; IMP biosynthesis via de novo pathway; 5-amino-1-(5-phospho-D-ribosyl)imidazole from N(2)-formyl-N(1)-(5-phospho-D-ribosyl)glycinamide: step 2/2. The sequence is that of Phosphoribosylformylglycinamidine cyclo-ligase from Actinobacillus pleuropneumoniae serotype 5b (strain L20).